The sequence spans 304 residues: Non-specific ribonucleoside hydrolase RihC (304 aa).

The active site involves histidine 233.

This sequence belongs to the IUNH family. RihC subfamily.

Its function is as follows. Hydrolyzes both purine and pyrimidine ribonucleosides with a broad-substrate specificity. In Shigella boydii serotype 4 (strain Sb227), this protein is Non-specific ribonucleoside hydrolase RihC.